The following is a 999-amino-acid chain: Probable K(+)/H(+) antiporter subunit A/B (999 aa).

The segment at 1–20 is disordered; it reads MTRPASVLAGPKSRPPIHSQ. The next 24 helical transmembrane spans lie at 31–48, 63–85, 106–128, 138–160, 162–181, 191–213, 233–255, 270–292, 299–321, 336–358, 389–411, 442–464, 488–510, 530–552, 604–621, 636–653, 660–682, 686–708, 729–751, 788–807, 846–868, 878–900, 913–935, and 955–977; these read LLSV…IAIF, AIAL…GGVL, FAWL…ARYY, FFAL…NLIL, AVFW…YWHH, MALT…IGKI, PLYG…QFPF, SAYL…FWPV, WFWI…AIFQ, LGLI…VFHI, GLFH…MAGV, YVAT…GVFF, FLVL…FLHT, GWNI…YFLM, RLLV…LLLG, AFAL…GSAY, LASL…WLSA, AVTQ…RWLP, LRDL…TVMT, TLGE…ALLL, FIPA…FLFL, FAAG…TRWV, SIGL…PFLT, and ILFD…IALA.

The protein in the N-terminal section; belongs to the CPA3 antiporters (TC 2.A.63) subunit A family. In the C-terminal section; belongs to the CPA3 antiporters (TC 2.A.63) subunit B family. As to quaternary structure, may form a heterooligomeric complex that consists of six subunits: PhaAB, PhaC, PhaD, PhaE, PhaF and PhaG.

Its subcellular location is the cell membrane. Its function is as follows. Part of a K(+) efflux system which is required for the adaptation of R.meliloti to alkaline pH as well as for the infection process during symbiotic nodule development. The polypeptide is Probable K(+)/H(+) antiporter subunit A/B (phaAB) (Rhizobium meliloti (strain 1021) (Ensifer meliloti)).